The sequence spans 374 residues: 3-dehydroquinate synthase (374 aa).

Belongs to the archaeal-type DHQ synthase family.

It catalyses the reaction 2-amino-2,3,7-trideoxy-D-lyxo-hept-6-ulosonate + NAD(+) + H2O = 3-dehydroquinate + NH4(+) + NADH + H(+). In terms of biological role, catalyzes the oxidative deamination and cyclization of 2-amino-3,7-dideoxy-D-threo-hept-6-ulosonic acid (ADH) to yield 3-dehydroquinate (DHQ), which is fed into the canonical shikimic pathway of aromatic amino acid biosynthesis. This chain is 3-dehydroquinate synthase, found in Methanocella arvoryzae (strain DSM 22066 / NBRC 105507 / MRE50).